The following is a 380-amino-acid chain: Cytochrome b (380 aa).

A run of 4 helical transmembrane segments spans residues 34 to 54, 78 to 99, 114 to 134, and 179 to 199; these read FGSLLAVCLMTQILTGLLLAM, WLIRNLHANGASFFFICIFLHI, WNTGVILLLTLMATAFVGYVL, and FFALHFLLPFAIAGITVVHLT. Residues His84 and His98 each contribute to the heme b site. Residues His183 and His197 each coordinate heme b. His202 provides a ligand contact to a ubiquinone. The next 4 membrane-spanning stretches (helical) occupy residues 227–247, 289–309, 321–341, and 348–368; these read LKDILGLTLMLTPFLTLALFS, LGGVLALAASVLILFLIPFLH, LSQTLFWLLVANLLILTWIGS, and FMIIGQMASLSYFTILLILFP.

It belongs to the cytochrome b family. As to quaternary structure, the cytochrome bc1 complex contains 11 subunits: 3 respiratory subunits (MT-CYB, CYC1 and UQCRFS1), 2 core proteins (UQCRC1 and UQCRC2) and 6 low-molecular weight proteins (UQCRH/QCR6, UQCRB/QCR7, UQCRQ/QCR8, UQCR10/QCR9, UQCR11/QCR10 and a cleavage product of UQCRFS1). This cytochrome bc1 complex then forms a dimer. Heme b is required as a cofactor.

It localises to the mitochondrion inner membrane. Functionally, component of the ubiquinol-cytochrome c reductase complex (complex III or cytochrome b-c1 complex) that is part of the mitochondrial respiratory chain. The b-c1 complex mediates electron transfer from ubiquinol to cytochrome c. Contributes to the generation of a proton gradient across the mitochondrial membrane that is then used for ATP synthesis. This is Cytochrome b (MT-CYB) from Gallus lafayettii (Sri Lanka junglefowl).